A 290-amino-acid polypeptide reads, in one-letter code: Cytochrome bo(3) ubiquinol oxidase subunit 2 (290 aa).

The signal sequence occupies residues 1 to 24; sequence MISINFNNFFKTLLLILIAFTLHG. Cysteine 25 carries the N-palmitoyl cysteine lipid modification. The S-diacylglycerol cysteine moiety is linked to residue cysteine 25. Residues 25 to 42 are Extracellular-facing; sequence CDSILFNPHGIIAIQECS. The chain crosses the membrane as a helical span at residues 43 to 63; sequence ILLISFLIMLFVIIPVIFMTI. Residues 64–87 lie on the Cytoplasmic side of the membrane; it reads YFSVKYRASNINAKYKPDWCDSKK. A helical transmembrane segment spans residues 88 to 108; it reads IEIIVWTIPISIILFLAFVTW. Residues 109–290 are Extracellular-facing; sequence NYSHILDPKK…TYSKNKVFKH (182 aa).

The protein belongs to the cytochrome c oxidase subunit 2 family. Heterooctamer of two A chains, two B chains, two C chains and two D chains.

The protein localises to the cell membrane. Its function is as follows. Cytochrome bo(3) ubiquinol terminal oxidase is the component of the aerobic respiratory chain of E.coli that predominates when cells are grown at high aeration. Has proton pump activity across the membrane in addition to electron transfer, pumping 2 protons/electron. This is Cytochrome bo(3) ubiquinol oxidase subunit 2 (cyoA) from Buchnera aphidicola subsp. Schizaphis graminum (strain Sg).